The chain runs to 1444 residues: Cleavage and polyadenylation specificity factor subunit 1 (1444 aa).

Disordered regions lie at residues 406 to 439, 549 to 571, 716 to 778, and 902 to 924; these read PPASTAREAADKEEPPSKKKRVDATTGWSGSKSV, EETLKGEGTEPEPGAPEAEDDGR, GGVR…PAPF, and FREKKPKPSKKKAEGGSTEEGTG. Residues 413–422 show a composition bias toward basic and acidic residues; it reads EAADKEEPPS. A phosphoserine mark is found at S757 and S767. Over residues 759–776 the composition is skewed to basic and acidic residues; it reads SKEEARRSSQPPADRDPA. The Nuclear localization signal motif lies at 894–909; the sequence is KKVPHNINFREKKPKP.

This sequence belongs to the CPSF1 family. Component of the cleavage and polyadenylation specificity factor (CPSF) complex, composed of CPSF1, CPSF2, CPSF3, CPSF4 and FIP1L1. Found in a complex with CPSF1, FIP1L1 and PAPOLA. Interacts with FIP1L1, TENT2/GLD2 and SRRM1. Interacts with TUT1; the interaction is direct and mediates the recruitment of the CPSF complex on the 3'UTR of selected pre-mRNAs. In terms of processing, the N-terminus is blocked.

The protein localises to the nucleus. It is found in the nucleoplasm. Its function is as follows. Component of the cleavage and polyadenylation specificity factor (CPSF) complex that plays a key role in pre-mRNA 3'-end formation, recognizing the AAUAAA signal sequence and interacting with poly(A) polymerase and other factors to bring about cleavage and poly(A) addition. This subunit is involved in the RNA recognition step of the polyadenylation reaction. May play a role in eye morphogenesis and the development of retinal ganglion cell projections to the midbrain. This Bos taurus (Bovine) protein is Cleavage and polyadenylation specificity factor subunit 1 (CPSF1).